A 1069-amino-acid polypeptide reads, in one-letter code: Protocadherin-8 (1069 aa).

The first 29 residues, M1 to S29, serve as a signal peptide directing secretion. Cadherin domains are found at residues K30–F135, P136–F245, Q247–I354, Q393–F497, T498–L609, and A615–S721. At K30–P747 the chain is on the extracellular side. N-linked (GlcNAc...) asparagine glycosylation is present at N616. The interval P719 to S738 is disordered. A helical membrane pass occupies residues L748 to I768. Topologically, residues A769–V1069 are cytoplasmic. Disordered regions lie at residues K777–S859, R905–S927, and L1031–V1069. Composition is skewed to basic and acidic residues over residues R780 to P790 and R905 to S920. The residue at position 1052 (S1052) is a Phosphoserine.

As to quaternary structure, the N-terminal extracellular domain forms homophilic interactions; these interactions activate p38 MAPK via TAOK2 and trigger endocytosis. Interacts with CDH2; this interaction may lead to CDH2 cointernalization. Interacts with CDH11. Interacts with TAOK2. As to expression, enriched in brain relative to peripheral tissues, with low expression in the testis. Expressed in hippocampal neurons (at protein level).

The protein resides in the cell membrane. Its subcellular location is the cell projection. It is found in the dendrite. It localises to the presynaptic cell membrane. The protein localises to the postsynaptic cell membrane. Calcium-dependent cell-adhesion protein. May play a role in activity-induced synaptic reorganization underlying long term memory. Could be involved in CDH2 internalization through TAOK2/p38 MAPK pathway. In hippocampal neurons, may play a role in the down-regulation of dendritic spines, maybe through its action on CDH2 endocytosis. The chain is Protocadherin-8 (Pcdh8) from Rattus norvegicus (Rat).